We begin with the raw amino-acid sequence, 273 residues long: 4-hydroxy-tetrahydrodipicolinate reductase (273 aa).

Residues 12–17 (GAGGRM) and E38 contribute to the NAD(+) site. R39 is a binding site for NADP(+). Residues 102-104 (GTT) and 126-129 (AANF) each bind NAD(+). The Proton donor/acceptor role is filled by H159. H160 is a binding site for (S)-2,3,4,5-tetrahydrodipicolinate. K163 (proton donor) is an active-site residue. 169-170 (GT) serves as a coordination point for (S)-2,3,4,5-tetrahydrodipicolinate.

The protein belongs to the DapB family. Homotetramer.

Its subcellular location is the cytoplasm. It carries out the reaction (S)-2,3,4,5-tetrahydrodipicolinate + NAD(+) + H2O = (2S,4S)-4-hydroxy-2,3,4,5-tetrahydrodipicolinate + NADH + H(+). The enzyme catalyses (S)-2,3,4,5-tetrahydrodipicolinate + NADP(+) + H2O = (2S,4S)-4-hydroxy-2,3,4,5-tetrahydrodipicolinate + NADPH + H(+). It participates in amino-acid biosynthesis; L-lysine biosynthesis via DAP pathway; (S)-tetrahydrodipicolinate from L-aspartate: step 4/4. In terms of biological role, catalyzes the conversion of 4-hydroxy-tetrahydrodipicolinate (HTPA) to tetrahydrodipicolinate. This chain is 4-hydroxy-tetrahydrodipicolinate reductase, found in Shigella sonnei (strain Ss046).